The chain runs to 362 residues: Biotin synthase (362 aa).

The 236-residue stretch at 70 to 305 (CCGNVVDLCS…QQIIRYAGGR (236 aa)) folds into the Radical SAM core domain. [4Fe-4S] cluster-binding residues include cysteine 88, cysteine 92, and cysteine 95. The [2Fe-2S] cluster site is built by cysteine 133, cysteine 170, cysteine 230, and arginine 300.

Belongs to the radical SAM superfamily. Biotin synthase family. As to quaternary structure, homodimer. [4Fe-4S] cluster is required as a cofactor. It depends on [2Fe-2S] cluster as a cofactor.

It carries out the reaction (4R,5S)-dethiobiotin + (sulfur carrier)-SH + 2 reduced [2Fe-2S]-[ferredoxin] + 2 S-adenosyl-L-methionine = (sulfur carrier)-H + biotin + 2 5'-deoxyadenosine + 2 L-methionine + 2 oxidized [2Fe-2S]-[ferredoxin]. The protein operates within cofactor biosynthesis; biotin biosynthesis; biotin from 7,8-diaminononanoate: step 2/2. In terms of biological role, catalyzes the conversion of dethiobiotin (DTB) to biotin by the insertion of a sulfur atom into dethiobiotin via a radical-based mechanism. The polypeptide is Biotin synthase (Synechocystis sp. (strain ATCC 27184 / PCC 6803 / Kazusa)).